A 161-amino-acid chain; its full sequence is uncharacterized protein (161 aa).

A disordered region spans residues 126 to 161; it reads TPSNCGESSTSSGQSSGDESNCSLRTHGVYTRGEQH. A compositionally biased stretch (low complexity) spans 128–148; that stretch reads SNCGESSTSSGQSSGDESNCS.

It belongs to the herpesviridae US1 family.

This is an uncharacterized protein from Human cytomegalovirus (strain AD169) (HHV-5).